We begin with the raw amino-acid sequence, 255 residues long: Myogenic factor 5 (255 aa).

The 52-residue stretch at 83-134 (DRRKAATMRERRRLKKVNQAFDTLKRCTTTNPNQRLPKVEILRNAIRYIESL) folds into the bHLH domain. The interval 217 to 249 (SEQPGLPLQDPASLSPVASTDSQPATPGASSSR) is disordered. Positions 232-249 (PVASTDSQPATPGASSSR) are enriched in polar residues.

As to quaternary structure, efficient DNA binding requires dimerization with another bHLH protein.

Its subcellular location is the nucleus. Acts as a transcriptional activator that promotes transcription of muscle-specific target genes and plays a role in muscle differentiation. Together with MYOG and MYOD1, co-occupies muscle-specific gene promoter core region during myogenesis. Induces fibroblasts to differentiate into myoblasts. Probable sequence specific DNA-binding protein. This Bos taurus (Bovine) protein is Myogenic factor 5 (MYF5).